A 642-amino-acid polypeptide reads, in one-letter code: Threonine--tRNA ligase (642 aa).

In terms of domain architecture, TGS spans 1-61 (MPVITLPDGS…ENDAQLSIIT (61 aa)). The tract at residues 243-534 (DHRKIGKQLD…LTEEFAGFFP (292 aa)) is catalytic. 3 residues coordinate Zn(2+): Cys334, His385, and His511.

It belongs to the class-II aminoacyl-tRNA synthetase family. Homodimer. Zn(2+) serves as cofactor.

It localises to the cytoplasm. It carries out the reaction tRNA(Thr) + L-threonine + ATP = L-threonyl-tRNA(Thr) + AMP + diphosphate + H(+). Catalyzes the attachment of threonine to tRNA(Thr) in a two-step reaction: L-threonine is first activated by ATP to form Thr-AMP and then transferred to the acceptor end of tRNA(Thr). Also edits incorrectly charged L-seryl-tRNA(Thr). The protein is Threonine--tRNA ligase of Enterobacter sp. (strain 638).